The sequence spans 145 residues: D-aminoacyl-tRNA deacylase (145 aa).

The short motif at 137 to 138 (GP) is the Gly-cisPro motif, important for rejection of L-amino acids element.

It belongs to the DTD family. In terms of assembly, homodimer.

It localises to the cytoplasm. It catalyses the reaction glycyl-tRNA(Ala) + H2O = tRNA(Ala) + glycine + H(+). It carries out the reaction a D-aminoacyl-tRNA + H2O = a tRNA + a D-alpha-amino acid + H(+). An aminoacyl-tRNA editing enzyme that deacylates mischarged D-aminoacyl-tRNAs. Also deacylates mischarged glycyl-tRNA(Ala), protecting cells against glycine mischarging by AlaRS. Acts via tRNA-based rather than protein-based catalysis; rejects L-amino acids rather than detecting D-amino acids in the active site. By recycling D-aminoacyl-tRNA to D-amino acids and free tRNA molecules, this enzyme counteracts the toxicity associated with the formation of D-aminoacyl-tRNA entities in vivo and helps enforce protein L-homochirality. This Proteus mirabilis (strain HI4320) protein is D-aminoacyl-tRNA deacylase.